The sequence spans 640 residues: Dextranase (640 aa).

A signal peptide spans 1–32 (MPGTGLGRLAKRMTAAAAVFFISTSAVLPAQA). Positions 33–49 (ATAPAAAPPGVPAALKA) are excised as a propeptide. The tract at residues 248-269 (EQKERLVPTEESGSIHYPEPGE) is disordered.

It belongs to the glycosyl hydrolase 49 family.

It localises to the secreted. It carries out the reaction Endohydrolysis of (1-&gt;6)-alpha-D-glucosidic linkages in dextran.. Functionally, efficiently decomposes water-insoluble glucan as well as dextran. The protein is Dextranase of Arthrobacter sp. (strain CB-8).